The sequence spans 378 residues: Heme chaperone HemW (378 aa).

One can recognise a Radical SAM core domain in the interval 1–237 (MVKLPPLSLY…LTAAGYQQYE (237 aa)). An S-adenosyl-L-methionine-binding site is contributed by Tyr10. Residues Cys16, Cys20, and Cys23 each contribute to the [4Fe-4S] cluster site. Residues Gly66, 67 to 68 (GT), Glu99, Gln126, Arg138, and Asp163 each bind S-adenosyl-L-methionine.

Belongs to the anaerobic coproporphyrinogen-III oxidase family. HemW subfamily. Binding of the [4Fe-4S] cofactor promotes dimerization. The cofactor is [4Fe-4S] cluster.

Its subcellular location is the cytoplasm. In terms of biological role, probably acts as a heme chaperone, transferring heme to the NarI subunit of the respiratory enzyme nitrate reductase; transfer may be stimulated by NADH. Binds one molecule of heme per monomer, possibly covalently. Heme binding is not affected by either [4Fe-4S] or S-adenosyl-L-methionine (SAM)-binding. Does not have coproporphyrinogen III dehydrogenase activity in vitro. Binds 1 [4Fe-4S] cluster. The cluster is coordinated with 3 cysteines and an exchangeable S-adenosyl-L-methionine. This Escherichia coli (strain K12) protein is Heme chaperone HemW.